The primary structure comprises 359 residues: Phospho-N-acetylmuramoyl-pentapeptide-transferase (359 aa).

The next 10 helical transmembrane spans lie at 21 to 41 (YITFRTIYASLTAFLICFLLG), 73 to 93 (TMGGLLIVFSVLVACLLWADL), 98 to 118 (IWVTLAALAGFTTIGFIDDYL), 143 to 163 (GICLLIFAASDTNTVLLVPFF), 166 to 186 (VAPDLGLFYIVLGVFVIVGTS), 202 to 222 (PLVISFVAYMVFAYVAGNAII), 237 to 257 (VTVFCGAMAGGLMGFLWFNAY), 261 to 281 (IFMGDVGSLSLGGALGTVAII), 286 to 306 (ILLTLVGGLFVVETLSVIFQV), and 336 to 356 (KIIVRFWIIAIALALIAVSTL).

Belongs to the glycosyltransferase 4 family. MraY subfamily. It depends on Mg(2+) as a cofactor.

Its subcellular location is the cell inner membrane. The catalysed reaction is UDP-N-acetyl-alpha-D-muramoyl-L-alanyl-gamma-D-glutamyl-meso-2,6-diaminopimeloyl-D-alanyl-D-alanine + di-trans,octa-cis-undecaprenyl phosphate = di-trans,octa-cis-undecaprenyl diphospho-N-acetyl-alpha-D-muramoyl-L-alanyl-D-glutamyl-meso-2,6-diaminopimeloyl-D-alanyl-D-alanine + UMP. It participates in cell wall biogenesis; peptidoglycan biosynthesis. In terms of biological role, catalyzes the initial step of the lipid cycle reactions in the biosynthesis of the cell wall peptidoglycan: transfers peptidoglycan precursor phospho-MurNAc-pentapeptide from UDP-MurNAc-pentapeptide onto the lipid carrier undecaprenyl phosphate, yielding undecaprenyl-pyrophosphoryl-MurNAc-pentapeptide, known as lipid I. The polypeptide is Phospho-N-acetylmuramoyl-pentapeptide-transferase (Desulfosudis oleivorans (strain DSM 6200 / JCM 39069 / Hxd3) (Desulfococcus oleovorans)).